A 264-amino-acid polypeptide reads, in one-letter code: Thymidylate synthase (264 aa).

R21 is a binding site for dUMP. H51 serves as a coordination point for (6R)-5,10-methylene-5,6,7,8-tetrahydrofolate. Residue 126 to 127 (RR) coordinates dUMP. The active-site Nucleophile is the C146. DUMP-binding positions include 166–169 (RSAD), N177, and 207–209 (HLY). Residue D169 participates in (6R)-5,10-methylene-5,6,7,8-tetrahydrofolate binding. S263 serves as a coordination point for (6R)-5,10-methylene-5,6,7,8-tetrahydrofolate.

This sequence belongs to the thymidylate synthase family. Bacterial-type ThyA subfamily. In terms of assembly, homodimer.

The protein localises to the cytoplasm. It catalyses the reaction dUMP + (6R)-5,10-methylene-5,6,7,8-tetrahydrofolate = 7,8-dihydrofolate + dTMP. It functions in the pathway pyrimidine metabolism; dTTP biosynthesis. In terms of biological role, catalyzes the reductive methylation of 2'-deoxyuridine-5'-monophosphate (dUMP) to 2'-deoxythymidine-5'-monophosphate (dTMP) while utilizing 5,10-methylenetetrahydrofolate (mTHF) as the methyl donor and reductant in the reaction, yielding dihydrofolate (DHF) as a by-product. This enzymatic reaction provides an intracellular de novo source of dTMP, an essential precursor for DNA biosynthesis. In Neisseria meningitidis serogroup B (strain ATCC BAA-335 / MC58), this protein is Thymidylate synthase.